Here is a 445-residue protein sequence, read N- to C-terminus: Phosphoglucosamine mutase (445 aa).

Catalysis depends on serine 101, which acts as the Phosphoserine intermediate. Positions 101, 240, 242, and 244 each coordinate Mg(2+). At serine 101 the chain carries Phosphoserine.

Belongs to the phosphohexose mutase family. The cofactor is Mg(2+). Post-translationally, activated by phosphorylation.

The catalysed reaction is alpha-D-glucosamine 1-phosphate = D-glucosamine 6-phosphate. Functionally, catalyzes the conversion of glucosamine-6-phosphate to glucosamine-1-phosphate. This chain is Phosphoglucosamine mutase, found in Pseudomonas paraeruginosa (strain DSM 24068 / PA7) (Pseudomonas aeruginosa (strain PA7)).